The chain runs to 219 residues: Orotidine 5'-phosphate decarboxylase (219 aa).

Residues Asp10, Lys32, 58 to 67 (DFKVADIPYT), Ser113, 163 to 173 (PGIGAQGGDPY), Gly186, and Arg187 contribute to the substrate site. Lys60 acts as the Proton donor in catalysis.

It belongs to the OMP decarboxylase family. Type 1 subfamily. Homodimer.

It catalyses the reaction orotidine 5'-phosphate + H(+) = UMP + CO2. It participates in pyrimidine metabolism; UMP biosynthesis via de novo pathway; UMP from orotate: step 2/2. Catalyzes the decarboxylation of orotidine 5'-monophosphate (OMP) to uridine 5'-monophosphate (UMP). The chain is Orotidine 5'-phosphate decarboxylase from Thermoplasma volcanium (strain ATCC 51530 / DSM 4299 / JCM 9571 / NBRC 15438 / GSS1).